Reading from the N-terminus, the 66-residue chain is Large ribosomal subunit protein uL29 (66 aa).

It belongs to the universal ribosomal protein uL29 family.

This is Large ribosomal subunit protein uL29 from Helicobacter pylori (strain P12).